Consider the following 479-residue polypeptide: Endoglucanase 20 (479 aa).

Positions 1–21 (MGKLLVLMLVGMFLAFESLEA) are cleaved as a signal peptide. An N-linked (GlcNAc...) asparagine glycan is attached at Asn-29. Asp-76 acts as the Nucleophile in catalysis. His-398 is a catalytic residue. N-linked (GlcNAc...) asparagine glycosylation occurs at Asn-442. Active-site residues include Asp-449 and Glu-458.

Belongs to the glycosyl hydrolase 9 (cellulase E) family.

The protein localises to the secreted. The enzyme catalyses Endohydrolysis of (1-&gt;4)-beta-D-glucosidic linkages in cellulose, lichenin and cereal beta-D-glucans.. The chain is Endoglucanase 20 from Arabidopsis thaliana (Mouse-ear cress).